The primary structure comprises 149 residues: Large ribosomal subunit protein bL9 (149 aa).

It belongs to the bacterial ribosomal protein bL9 family.

Functionally, binds to the 23S rRNA. The sequence is that of Large ribosomal subunit protein bL9 from Dichelobacter nodosus (strain VCS1703A).